The following is a 242-amino-acid chain: 1-(5-phosphoribosyl)-5-[(5-phosphoribosylamino)methylideneamino] imidazole-4-carboxamide isomerase (242 aa).

Residue aspartate 10 is the Proton acceptor of the active site. Residue aspartate 131 is the Proton donor of the active site.

This sequence belongs to the HisA/HisF family.

The protein localises to the cytoplasm. The enzyme catalyses 1-(5-phospho-beta-D-ribosyl)-5-[(5-phospho-beta-D-ribosylamino)methylideneamino]imidazole-4-carboxamide = 5-[(5-phospho-1-deoxy-D-ribulos-1-ylimino)methylamino]-1-(5-phospho-beta-D-ribosyl)imidazole-4-carboxamide. It participates in amino-acid biosynthesis; L-histidine biosynthesis; L-histidine from 5-phospho-alpha-D-ribose 1-diphosphate: step 4/9. The chain is 1-(5-phosphoribosyl)-5-[(5-phosphoribosylamino)methylideneamino] imidazole-4-carboxamide isomerase from Granulibacter bethesdensis (strain ATCC BAA-1260 / CGDNIH1).